Consider the following 322-residue polypeptide: Probable manganese-dependent inorganic pyrophosphatase (322 aa).

Mn(2+) contacts are provided by His-10, Asp-14, Asp-16, Asp-86, His-108, and Asp-160.

Belongs to the PPase class C family. It depends on Mn(2+) as a cofactor.

It localises to the cytoplasm. It catalyses the reaction diphosphate + H2O = 2 phosphate + H(+). In Archaeoglobus fulgidus (strain ATCC 49558 / DSM 4304 / JCM 9628 / NBRC 100126 / VC-16), this protein is Probable manganese-dependent inorganic pyrophosphatase (ppaC).